The following is a 274-amino-acid chain: MANYTAADVKRLRELTGAGMMASKNALVEADGDFDKAVELLRIKGAKDVGKRAERATAEGLVAAKDGALIELNSETDFVAKNAEFQSVADQIVAAAAAAKATDIDALKAAKVGDTTVEQVIADLSAKIGEKLELRRVAYFDGNVETYLHKRAADLPPAVGVLVEYTGDGENGTEAAHAVALQIAALKAKYLTREDVPEDVVANERRIAEETARNEGKPEQALPKIVEGRVTGFYKDVVLLDQPSVSDNKKTVKALLDEAGVTVTRFVRFEVGQA.

An involved in Mg(2+) ion dislocation from EF-Tu region spans residues 76-79 (TDFV).

It belongs to the EF-Ts family.

Its subcellular location is the cytoplasm. Its function is as follows. Associates with the EF-Tu.GDP complex and induces the exchange of GDP to GTP. It remains bound to the aminoacyl-tRNA.EF-Tu.GTP complex up to the GTP hydrolysis stage on the ribosome. This chain is Elongation factor Ts, found in Mycobacterium sp. (strain JLS).